We begin with the raw amino-acid sequence, 160 residues long: Putative antiporter subunit mnhE2 (160 aa).

3 helical membrane-spanning segments follow: residues 22–42 (SFQF…IYIL), 61–81 (FLGV…NYIL), and 102–122 (WAIT…VIRI).

It belongs to the CPA3 antiporters (TC 2.A.63) subunit E family. In terms of assembly, may form a heterooligomeric complex that consists of seven subunits: mnhA2, mnhB2, mnhC2, mnhD2, mnhE2, mnhF2 and mnhG2.

The protein localises to the cell membrane. This Staphylococcus haemolyticus (strain JCSC1435) protein is Putative antiporter subunit mnhE2 (mnhE2).